Consider the following 1503-residue polypeptide: Lysine-specific demethylase 5B-B (1503 aa).

A JmjN domain is found at 15–56; sequence CPVFEPSWEEFKDPFAFINKIRPIAEKTGICKVRPPPDWQPP. The region spanning 80–170 is the ARID domain; that stretch reads TRVKLNFLDQ…ILYPYNLFQS (91 aa). Residues 202-211 are compositionally biased toward polar residues; it reads VPLQPSNTSA. Disordered regions lie at residues 202-223 and 268-287; these read VPLQ…KTES and IKEL…NIPP. Residues 268-278 are compositionally biased toward basic and acidic residues; that stretch reads IKELNPEPEKS. The PHD-type 1 zinc finger occupies 295-345; it reads LYVCLVCGKGNDEDRLLLCDGCDDSYHTFCLIPPLTDVPKGDWRCPKCLTQ. One can recognise a JmjC domain in the interval 439–605; that stretch reads KYLQCGWNLN…LGRQCVDHYR (167 aa). His485, Asp488, and His573 together coordinate Fe cation. The PHD-type 2 zinc-finger motif lies at 1168 to 1216; that stretch reads LKVCVCQKPAMGAMLQCELCRDAFHSVCVRGPSDPLDPEAWLCPLCLRS. 2 disordered regions span residues 1362-1381 and 1403-1442; these read TNTS…TETD and ERGT…DSEE. The PHD-type 3 zinc finger occupies 1444–1497; it reads MTLCPAESCLQPEGEEVDWVQCDCCNRWFHMICVGVSAELAAEEDYMCVSCSTS.

The protein belongs to the JARID1 histone demethylase family. Fe(2+) serves as cofactor.

The protein resides in the nucleus. The catalysed reaction is N(6),N(6),N(6)-trimethyl-L-lysyl(4)-[histone H3] + 3 2-oxoglutarate + 3 O2 = L-lysyl(4)-[histone H3] + 3 formaldehyde + 3 succinate + 3 CO2. In terms of biological role, histone demethylase that demethylates 'Lys-4' of histone H3, thereby playing a central role in histone code. Does not demethylate histone H3 'Lys-9' or H3 'Lys-27'. Demethylates trimethylated, dimethylated and monomethylated H3 'Lys-4'. Acts as a transcriptional corepressor. This Danio rerio (Zebrafish) protein is Lysine-specific demethylase 5B-B (kdm5bb).